Consider the following 151-residue polypeptide: Putative membrane protein ORF10 (151 aa).

2 helical membrane-spanning segments follow: residues 7–23 and 107–123; these read LCLA…GVVV and GLVA…IIMY.

Its subcellular location is the membrane. The polypeptide is Putative membrane protein ORF10 (ORF10) (Ictalurid herpesvirus 1 (strain Auburn) (IcHV-1)).